We begin with the raw amino-acid sequence, 241 residues long: MGRGRVQLKRIENKINRQVTFSKRRSGLLKKAHEISVLCDAEVALVIFSSKGKLFEYSTDSCMEKILERYDRYLYSDKQLVGRDISQSENWVLEHAKLKARVEVLEKNKRNFMGEDLDSLSLKELQSLEHQLHAAIKSIRSRKNQAMFESISALQKKDKVLQDHNNALLKKIKEREKNTVHQEVQLIQCSNNSSILQPQYCLTSSRDGFVGRVEGENEGASSLAEPNSLLPAWMLRPTTNE.

In terms of domain architecture, MADS-box spans 3–57 (RGRVQLKRIENKINRQVTFSKRRSGLLKKAHEISVLCDAEVALVIFSSKGKLFEY). In terms of domain architecture, K-box spans 88 to 178 (SENWVLEHAK…LKKIKEREKN (91 aa)).

Its subcellular location is the nucleus. Functionally, probable transcription factor. The protein is Agamous-like MADS-box protein AGL8 homolog (AGL8) of Sinapis alba (White mustard).